We begin with the raw amino-acid sequence, 393 residues long: S-adenosylmethionine synthase 2 (393 aa).

E9 serves as a coordination point for Mg(2+). H15 is an ATP binding site. E43 provides a ligand contact to K(+). Positions 56 and 99 each coordinate L-methionine. Residues 167-169 (DGK), 235-238 (SGRF), D246, 252-253 (RK), A269, K273, and K277 each bind ATP. Residue D246 coordinates L-methionine. K277 provides a ligand contact to L-methionine.

The protein belongs to the AdoMet synthase family. In terms of assembly, homotetramer. Mn(2+) serves as cofactor. Mg(2+) is required as a cofactor. It depends on Co(2+) as a cofactor. The cofactor is K(+).

It localises to the cytoplasm. The enzyme catalyses L-methionine + ATP + H2O = S-adenosyl-L-methionine + phosphate + diphosphate. It functions in the pathway amino-acid biosynthesis; S-adenosyl-L-methionine biosynthesis; S-adenosyl-L-methionine from L-methionine: step 1/1. In terms of biological role, catalyzes the formation of S-adenosylmethionine from methionine and ATP. The reaction comprises two steps that are both catalyzed by the same enzyme: formation of S-adenosylmethionine (AdoMet) and triphosphate, and subsequent hydrolysis of the triphosphate. This Elaeagnus umbellata (Autumn olive) protein is S-adenosylmethionine synthase 2 (SAMS2).